We begin with the raw amino-acid sequence, 555 residues long: Polypyrimidine tract-binding protein 1 (555 aa).

Residue methionine 1 is modified to N-acetylmethionine. Serine 16 carries the phosphoserine modification. RRM domains follow at residues 58 to 142 (RVIH…SSPN), 183 to 259 (LRII…FSKL), and 361 to 412 (SVLL…SQAQ). Lysine 64 is covalently cross-linked (Glycyl lysine isopeptide (Lys-Gly) (interchain with G-Cter in SUMO2)). The residue at position 126 (tyrosine 126) is a Phosphotyrosine. Residue threonine 137 is modified to Phosphothreonine. Serine 140 carries the post-translational modification Phosphoserine. A Glycyl lysine isopeptide (Lys-Gly) (interchain with G-Cter in SUMO2) cross-link involves residue lysine 217. The disordered stretch occupies residues 435–457 (HQSVQLPREGQEDQGLTKDYGSS). The residue at position 457 (serine 457) is a Phosphoserine. The RRM 4 domain maps to 478–553 (ATLHLSNIPP…HHLRVSFSKS (76 aa)).

Monomer. Part of a ternary complex containing KHSRP, PTBP1, PTBP2 and HNRPH1. Interacts with SFPQ. Interacts with RAVER1. Interacts with IVNS1ABP (via BACK domain); the interaction is direct. Expressed in myoblast; expression gradually decreases during muscle cell differentiation (at protein level).

It localises to the nucleus. Its function is as follows. Plays a role in pre-mRNA splicing and in the regulation of alternative splicing events. Activates exon skipping of its own pre-mRNA during muscle cell differentiation. Binds to the polypyrimidine tract of introns. May promote RNA looping when bound to two separate polypyrimidine tracts in the same pre-mRNA. May promote the binding of U2 snRNP to pre-mRNA. Cooperates with RAVER1 to modulate switching between mutually exclusive exons during maturation of the TPM1 pre-mRNA. Represses the splicing of MAPT/Tau exon 10. Binds to polypyrimidine-rich controlling element (PCE) of CFTR and promotes exon skipping of CFTR exon 9, thereby antagonizing TIA1 and its role in exon inclusion of CFTR exon 9. Plays a role in the splicing of pyruvate kinase PKM by binding repressively to a polypyrimidine tract flanking PKM exon 9, inhibiting exon 9 inclusion and resulting in exon 10 inclusion and production of the PKM M2 isoform. In Mus musculus (Mouse), this protein is Polypyrimidine tract-binding protein 1 (Ptbp1).